Consider the following 389-residue polypeptide: Large envelope protein (389 aa).

Position 1 is an N-acetylmethionine (Met-1). Gly-2 carries the N-myristoyl glycine; by host lipid modification. The tract at residues 2–108 is pre-S1; that stretch reads GTNLSVPNPL…PPLRDSHPQA (107 aa). Residues 2–163 form a pre-S region; it reads GTNLSVPNPL…SARTGDPVTI (162 aa). The Virion surface; in external conformation portion of the chain corresponds to 2-170; the sequence is GTNLSVPNPL…VTIMENITSG (169 aa). Over 2–242 the chain is Intravirion; in internal conformation; it reads GTNLSVPNPL…PGYRWMCLRR (241 aa). Over residues 77–95 the composition is skewed to polar residues; the sequence is VSTIPPPASTNRQSGRQPT. Residues 77–103 form a disordered region; that stretch reads VSTIPPPASTNRQSGRQPTPISPPLRD. The segment at 109–163 is pre-S2; that stretch reads MQWNSTALHQALQDPRVRGLYLPAGGSSSGTVNPAPNIASHISSISARTGDPVTI. Residues 171-191 form a helical membrane-spanning segment; that stretch reads FLGPLLVLQAGFFLLTRILTI. Over 192-242 the chain is Intravirion; in external conformation; the sequence is PQSLDSWWTSLNFLGGSPVCLGQNSQSPTSNHSPTSCPPICPGYRWMCLRR. Residues 243–263 form a helical membrane-spanning segment; it reads FIIFLFILLLCLIFLLVLLDY. The Virion surface segment spans residues 264 to 337; sequence QGMLPVCPLI…WASVRFSWLS (74 aa). A glycan (N-linked (GlcNAc...) asparagine; by host) is linked at Asn-309. A helical membrane pass occupies residues 338 to 358; the sequence is LLVPFVQWFVGLSPTVWLSAI. Residues 359–364 lie on the Intravirion side of the membrane; sequence WMMWYW. Residues 365–387 traverse the membrane as a helical segment; it reads GPSLYSIVSPFIPLLPIFFCLWV. The Virion surface segment spans residues 388 to 389; it reads YI.

The protein belongs to the orthohepadnavirus major surface antigen family. In terms of assembly, in its internal form (Li-HBsAg), interacts with the capsid protein and with the isoform S. Interacts with host chaperone CANX. As to quaternary structure, associates with host chaperone CANX through its pre-S2 N glycan; this association may be essential for isoform M proper secretion. Interacts with isoform L. Interacts with the antigens of satellite virus HDV (HDVAgs); this interaction is required for encapsidation of HDV genomic RNA. In terms of processing, isoform M is N-terminally acetylated by host at a ratio of 90%, and N-glycosylated by host at the pre-S2 region. Post-translationally, myristoylated.

The protein localises to the virion membrane. In terms of biological role, the large envelope protein exists in two topological conformations, one which is termed 'external' or Le-HBsAg and the other 'internal' or Li-HBsAg. In its external conformation the protein attaches the virus to cell receptors and thereby initiating infection. This interaction determines the species specificity and liver tropism. This attachment induces virion internalization predominantly through caveolin-mediated endocytosis. The large envelope protein also assures fusion between virion membrane and endosomal membrane. In its internal conformation the protein plays a role in virion morphogenesis and mediates the contact with the nucleocapsid like a matrix protein. Functionally, the middle envelope protein plays an important role in the budding of the virion. It is involved in the induction of budding in a nucleocapsid independent way. In this process the majority of envelope proteins bud to form subviral lipoprotein particles of 22 nm of diameter that do not contain a nucleocapsid. The sequence is that of Large envelope protein from Hepatitis B virus genotype A2 subtype adw (isolate Japan/Nishioka/1983) (HBV-A).